The chain runs to 1939 residues: Myosin heavy chain, skeletal muscle, adult (1939 aa).

N-acetylalanine is present on alanine 2. The 50-residue stretch at 34–83 (DAKSSVFVVHPKESFVKGTIQSKEGGKVTVKTEGGETLTVKEDQVFSMNP) folds into the Myosin N-terminal SH3-like domain. Lysine 36 carries the N6-methyllysine modification. Residues 87-781 (DKIEDMAMMT…LLGLLEEMRD (695 aa)) enclose the Myosin motor domain. The residue at position 131 (lysine 131) is an N6,N6,N6-trimethyllysine. 180–187 (GESGAGKT) contacts ATP. Lysine 552 carries the post-translational modification N6,N6,N6-trimethyllysine. The segment at 658 to 680 (LNKLMANLRSTHPHFVRCIIPNE) is actin-binding. A Pros-methylhistidine modification is found at histidine 756. Positions 760 to 774 (RFGHTKVFFKAGLLG) are actin-binding. The 30-residue stretch at 784–813 (LAEIITRTQARCRGFLMRVEYRRMVERRES) folds into the IQ domain. The segment at 839 to 841 (IKP) is hinge. Positions 842–1939 (LLKSAESEKE…IHGKKIEEEE (1098 aa)) form a coiled coil.

It belongs to the TRAFAC class myosin-kinesin ATPase superfamily. Myosin family. In terms of assembly, muscle myosin is a hexameric protein that consists of 2 heavy chain subunits (MHC), 2 alkali light chain subunits (MLC) and 2 regulatory light chain subunits (MLC-2).

It localises to the cytoplasm. Its subcellular location is the myofibril. In terms of biological role, muscle contraction. Myosin is a protein that binds to F-actin and has ATPase activity that is activated by F-actin. This Gallus gallus (Chicken) protein is Myosin heavy chain, skeletal muscle, adult.